The chain runs to 25 residues: Small ribosomal subunit protein eS32A (25 aa).

The disordered stretch occupies residues 1 to 25 (MRDKWRKKRVRRLKRKRRKMRARSK).

It belongs to the eukaryotic ribosomal protein eS32 family. As to quaternary structure, component of the large ribosomal subunit (LSU). Mature yeast ribosomes consist of a small (40S) and a large (60S) subunit. The 40S small subunit contains 1 molecule of ribosomal RNA (18S rRNA) and at least 33 different proteins. The large 60S subunit contains 3 rRNA molecules (25S, 5.8S and 5S rRNA) and at least 46 different proteins.

It localises to the cytoplasm. The protein resides in the nucleus. Functionally, component of the ribosome, a large ribonucleoprotein complex responsible for the synthesis of proteins in the cell. The small ribosomal subunit (SSU) binds messenger RNAs (mRNAs) and translates the encoded message by selecting cognate aminoacyl-transfer RNA (tRNA) molecules. The large subunit (LSU) contains the ribosomal catalytic site termed the peptidyl transferase center (PTC), which catalyzes the formation of peptide bonds, thereby polymerizing the amino acids delivered by tRNAs into a polypeptide chain. The nascent polypeptides leave the ribosome through a tunnel in the LSU and interact with protein factors that function in enzymatic processing, targeting, and the membrane insertion of nascent chains at the exit of the ribosomal tunnel. This chain is Small ribosomal subunit protein eS32A (rpl4101), found in Schizosaccharomyces pombe (strain 972 / ATCC 24843) (Fission yeast).